The sequence spans 119 residues: Holo-[acyl-carrier-protein] synthase (119 aa).

Mg(2+) contacts are provided by Asp8 and Glu59.

This sequence belongs to the P-Pant transferase superfamily. AcpS family. Mg(2+) serves as cofactor.

The protein localises to the cytoplasm. It carries out the reaction apo-[ACP] + CoA = holo-[ACP] + adenosine 3',5'-bisphosphate + H(+). Functionally, transfers the 4'-phosphopantetheine moiety from coenzyme A to a Ser of acyl-carrier-protein. This chain is Holo-[acyl-carrier-protein] synthase, found in Streptococcus agalactiae serotype Ia (strain ATCC 27591 / A909 / CDC SS700).